Here is a 61-residue protein sequence, read N- to C-terminus: Metallothionein (61 aa).

An N-acetylmethionine modification is found at Met1. Positions 1-29 (MDPNCSCAAGGSCTCAGSCKCKECKCTSC) are beta. A divalent metal cation-binding residues include Cys5, Cys7, Cys13, Cys15, Cys19, Cys21, Cys24, Cys26, Cys29, Cys33, Cys34, Cys36, Cys37, Cys41, Cys44, Cys48, Cys50, Cys57, Cys59, and Cys60. Positions 30-61 (KKSCCSCCPPGCTKCAQGCVCKGASDKCNCCA) are alpha.

The protein belongs to the metallothionein superfamily. Type 1 family. Monomer.

Metallothioneins have a high content of cysteine residues that bind various heavy metals. The protein is Metallothionein of Balaena mysticetus (Bowhead whale).